We begin with the raw amino-acid sequence, 131 residues long: Inner membrane protein YecN (131 aa).

At methionine 1–threonine 107 the chain is on the cytoplasmic side. A helical membrane pass occupies residues tryptophan 108–phenylalanine 128. Topologically, residues serine 129–arginine 131 are periplasmic.

The protein resides in the cell inner membrane. The protein is Inner membrane protein YecN (yecN) of Escherichia coli O6:H1 (strain CFT073 / ATCC 700928 / UPEC).